The following is a 130-amino-acid chain: MCLSYNRRNQRKKVVLMTIKKFSLLAIASLSLLSLAACDMDDKDDHMDNQPKTSQTSKKVKLSEDKAKSIALKDASVTEADAQMLSVTQDNEDGKAVYEIEFQNKDQEYSYTIDANSGDIVEKSSEPIND.

The interval 41–64 is disordered; that stretch reads DDKDDHMDNQPKTSQTSKKVKLSE.

This is an uncharacterized protein from Streptococcus pyogenes serotype M6 (strain ATCC BAA-946 / MGAS10394).